We begin with the raw amino-acid sequence, 84 residues long: Carboxysome shell vertex protein CsoS4B (84 aa).

Residues 1 to 77 (MQILQVKKQL…TDLTVGGIID (77 aa)) enclose the BMV domain.

Belongs to the CcmL/EutN family. CsoS4 subfamily. In terms of assembly, homopentamer.

It localises to the carboxysome. Its function is as follows. Probably forms vertices in the carboxysome, a polyhedral inclusion where RuBisCO (ribulose bisphosphate carboxylase, cbbL-cbbS) is sequestered. Has been modeled to induce curvature upon insertion into an otherwise flat hexagonal layer of major carboxysome subunits. The polypeptide is Carboxysome shell vertex protein CsoS4B (Hydrogenovibrio crunogenus (strain DSM 25203 / XCL-2) (Thiomicrospira crunogena)).